Consider the following 474-residue polypeptide: Ribulose bisphosphate carboxylase large chain (474 aa).

The substrate site is built by Asn-123 and Thr-173. The Proton acceptor role is filled by Lys-175. Position 177 (Lys-177) interacts with substrate. Residues Lys-201, Asp-203, and Glu-204 each contribute to the Mg(2+) site. At Lys-201 the chain carries N6-carboxylysine. His-293 acts as the Proton acceptor in catalysis. Substrate contacts are provided by Arg-294, His-326, and Ser-378.

This sequence belongs to the RuBisCO large chain family. Type I subfamily. As to quaternary structure, heterohexadecamer of 8 large chains and 8 small chains; disulfide-linked. The disulfide link is formed within the large subunit homodimers. Requires Mg(2+) as cofactor. In terms of processing, the disulfide bond which can form in the large chain dimeric partners within the hexadecamer appears to be associated with oxidative stress and protein turnover.

The protein resides in the carboxysome. It carries out the reaction 2 (2R)-3-phosphoglycerate + 2 H(+) = D-ribulose 1,5-bisphosphate + CO2 + H2O. It catalyses the reaction D-ribulose 1,5-bisphosphate + O2 = 2-phosphoglycolate + (2R)-3-phosphoglycerate + 2 H(+). Its function is as follows. RuBisCO catalyzes two reactions: the carboxylation of D-ribulose 1,5-bisphosphate, the primary event in carbon dioxide fixation, as well as the oxidative fragmentation of the pentose substrate in the photorespiration process. Both reactions occur simultaneously and in competition at the same active site. The polypeptide is Ribulose bisphosphate carboxylase large chain (Synechococcus sp).